Reading from the N-terminus, the 314-residue chain is Coiled-coil domain-containing protein 42 like-2 (314 aa).

Coiled coils occupy residues 34–133 and 175–231; these read RLLE…KGTL and NKLL…FQWE.

It belongs to the CFAP73 family.

This Xenopus tropicalis (Western clawed frog) protein is Coiled-coil domain-containing protein 42 like-2.